We begin with the raw amino-acid sequence, 460 residues long: Ammonium transporter Rh type C (460 aa).

Over 1 to 9 (MIWNTNLRW) the chain is Cytoplasmic. The chain crosses the membrane as a helical span at residues 10 to 30 (RLPVACLLLEVALIALFGVFV). Topologically, residues 31–61 (RYDMDADPHWVQEKVIKNLSTDLENEFYYRY) are extracellular. An N-linked (GlcNAc...) asparagine glycan is attached at Asn-48. A helical membrane pass occupies residues 62–82 (PSFQDVHVMIFVGFGFLMTFL). Topologically, residues 83 to 89 (QRYGYSS) are cytoplasmic. The chain crosses the membrane as a helical span at residues 90–110 (VGFNFLLAAFGIQWALLMQGW). The Extracellular segment spans residues 111–125 (LQSFDGRYILVDLEN). A helical membrane pass occupies residues 126-145 (LINADFCVGSVCVAFGAVLG). Topologically, residues 146 to 151 (KVSPVQ) are cytoplasmic. The chain crosses the membrane as a helical span at residues 152–174 (LLIMTLFQVTLFSINEYILLNLL). Residues 175 to 179 (EVKDS) are Extracellular-facing. A helical membrane pass occupies residues 180 to 200 (GGSMTIHAFGAYFGLTVAWIL). The Cytoplasmic segment spans residues 201–219 (YRPNLHLSKERQSSTYHSD). Residues 220 to 240 (LFAMIGTLFLWMYWPSFNSAI) traverse the membrane as a helical segment. Topologically, residues 241–251 (SNHGDAQHRAA) are extracellular. A helical transmembrane segment spans residues 252 to 272 (INTYCSLAACVLTSVALSSAL). Residues 273–285 (HRKGKLDMVHIQN) lie on the Cytoplasmic side of the membrane. The helical transmembrane segment at 286-303 (ATLAGGVGLGTVAELMVL) threads the bilayer. The Extracellular portion of the chain corresponds to 304–306 (PFG). Residues 307 to 329 (SLIIGFVCGIVSTLGFVYLTPFL) traverse the membrane as a helical segment. Residues 330–346 (ESRLHIQDTCGVHNLHG) lie on the Cytoplasmic side of the membrane. Residues 347–367 (IPGIIGGIAGAVTASIANIDL) form a helical membrane-spanning segment. The Extracellular segment spans residues 368–396 (YGEEGLAYAFGIERSKLNWSPNMQGRFQA). The helical transmembrane segment at 397–417 (AGLFVSLAMALVGGVIVGVIL) threads the bilayer. Residues 418–460 (RLPFWGQAPDENCFEDAVYWEIPKEPKSTALRSEDSSIKPPEP) lie on the Cytoplasmic side of the membrane.

It belongs to the ammonium transporter (TC 2.A.49) family. Rh subfamily. As to quaternary structure, homotrimer. Post-translationally, N-glycosylated.

The protein localises to the apical cell membrane. The enzyme catalyses NH4(+)(in) = NH4(+)(out). It catalyses the reaction methylamine(out) = methylamine(in). The catalysed reaction is CO2(out) = CO2(in). In terms of biological role, ammonium transporter involved in the maintenance of acid-base homeostasis. Transports ammonium and its related derivative methylammonium across the plasma membrane of epithelial cells likely contributing to renal transepithelial ammonia transport and ammonia metabolism. Postulated to primarily mediate an electroneutral bidirectional transport of NH3 ammonia species according to a mechanism that implies interaction of an NH4(+) ion with acidic residues of the pore entry followed by dissociation of NH4(+) into NH3 and H(+). As a result NH3 transits through the central pore and is protonated on the extracellular side reforming NH4(+). May act as a CO2 channel providing for renal acid secretion. In Bos taurus (Bovine), this protein is Ammonium transporter Rh type C (RHCG).